Reading from the N-terminus, the 53-residue chain is Conotoxin Cal6.23 (53 aa).

The first 22 residues, 1–22, serve as a signal peptide directing secretion; the sequence is MKLTAVLMVAVLVLTACQLITA. 3 cysteine pairs are disulfide-bonded: cysteine 25-cysteine 40, cysteine 32-cysteine 47, and cysteine 39-cysteine 51.

It belongs to the conotoxin O1 superfamily. Expressed by the venom duct.

The protein resides in the secreted. Probable neurotoxin. The polypeptide is Conotoxin Cal6.23 (Californiconus californicus (California cone)).